Here is a 151-residue protein sequence, read N- to C-terminus: Ribosomal RNA large subunit methyltransferase H (151 aa).

S-adenosyl-L-methionine-binding positions include Leu-73, Gly-100, and 119 to 124 (LTKLTL).

It belongs to the RNA methyltransferase RlmH family. Homodimer.

It localises to the cytoplasm. It catalyses the reaction pseudouridine(1915) in 23S rRNA + S-adenosyl-L-methionine = N(3)-methylpseudouridine(1915) in 23S rRNA + S-adenosyl-L-homocysteine + H(+). Specifically methylates the pseudouridine at position 1915 (m3Psi1915) in 23S rRNA. This Campylobacter hominis (strain ATCC BAA-381 / DSM 21671 / CCUG 45161 / LMG 19568 / NCTC 13146 / CH001A) protein is Ribosomal RNA large subunit methyltransferase H.